Reading from the N-terminus, the 951-residue chain is Leucine-rich repeat-containing G-protein coupled receptor 4 (951 aa).

The signal sequence occupies residues 1 to 24 (MPGPLRLLCFFALGLLGSAGPSGA). The LRRNT domain maps to 25–57 (APPLCAAPCSCDGDRRVDCSGKGLTAVPEGLSA). The Extracellular segment spans residues 25–544 (APPLCAAPCS…LLGSWMIRLT (520 aa)). Disulfide bonds link cysteine 29-cysteine 35 and cysteine 33-cysteine 43. LRR repeat units lie at residues 58–79 (FTQA…AFKN), 82–103 (FLEE…ALSG), 106–127 (ELKV…AIRG), 130–151 (ALQS…SFEG), 154–177 (QLRH…SNLP), 178–199 (TLQA…AFTN), 202–223 (SLVV…CFDG), 226–247 (NLET…IKAL), 249–270 (SLKE…AFAG), 273–294 (LLRT…AFHN), 320–341 (HLES…LCQN), 344–365 (MLRT…NGCR), 366–387 (ALEE…TFQG), 390–411 (SLRI…AFAK), and 414–435 (TITN…GLNG). Asparagine 68 carries N-linked (GlcNAc...) asparagine glycosylation. Residues asparagine 188 and asparagine 199 are each glycosylated (N-linked (GlcNAc...) asparagine). Residue asparagine 294 is glycosylated (N-linked (GlcNAc...) asparagine). Cysteine 339 and cysteine 364 are disulfide-bonded. 2 disulfides stabilise this stretch: cysteine 470–cysteine 522 and cysteine 471–cysteine 476. The disordered stretch occupies residues 487 to 512 (NSPQDHSVTKEKGATDAANATSTAES). Residues 501–510 (TDAANATSTA) are compositionally biased toward low complexity. N-linked (GlcNAc...) asparagine glycosylation is present at asparagine 505. Residues 545-565 (VWFIFLVALLFNLLVILTVFA) traverse the membrane as a helical segment. The Cytoplasmic portion of the chain corresponds to 566-575 (SCSSLPASKL). A helical transmembrane segment spans residues 576–596 (FIGLISVSNLLMGIYTGILTF). Topologically, residues 597-619 (LDAVSWGRFAEFGIWWETGSGCK) are extracellular. Cysteine 618 and cysteine 693 are oxidised to a cystine. Residues 620–640 (VAGSLAVFSSESAVFLLTLAA) traverse the membrane as a helical segment. Residues 641 to 661 (VERSVFAKDVMKNGKSSHLRQ) lie on the Cytoplasmic side of the membrane. Residues 662-682 (FQVAALVALLGAAIAGCFPLF) form a helical membrane-spanning segment. At 683-703 (HGGQYSASPLCLPFPTGETPS) the chain is on the extracellular side. A helical membrane pass occupies residues 704-724 (LGFTVTLVLLNSLAFLLMAII). At 725 to 756 (YTKLYCNLEKEDPSENSQSSMIKHVAWLIFTN) the chain is on the cytoplasmic side. A helical transmembrane segment spans residues 757 to 777 (CIFFCPVAFFSFAPLITAISI). At 778 to 783 (SPEIMK) the chain is on the extracellular side. The chain crosses the membrane as a helical span at residues 784–804 (SVTLIFFPLPACLNPVLYVFF). Topologically, residues 805-951 (NPKFKDDWKL…YAYNLPRVRD (147 aa)) are cytoplasmic. Residue serine 920 is modified to Phosphoserine.

Belongs to the G-protein coupled receptor 1 family.

The protein resides in the cell membrane. Functionally, receptor for R-spondins that potentiates the canonical Wnt signaling pathway and is involved in the formation of various organs. Upon binding to R-spondins (RSPO1, RSPO2, RSPO3 or RSPO4), associates with phosphorylated LRP6 and frizzled receptors that are activated by extracellular Wnt receptors, triggering the canonical Wnt signaling pathway to increase expression of target genes. In contrast to classical G-protein coupled receptors, does not activate heterotrimeric G-proteins to transduce the signal. Its function as activator of the Wnt signaling pathway is required for the development of various organs, including liver, kidney, intestine, bone, reproductive tract and eye. May also act as a receptor for norrin (NDP), such results however require additional confirmation in vivo. Required during spermatogenesis to activate the Wnt signaling pathway in peritubular myoid cells. Required for the maintenance of intestinal stem cells and Paneth cell differentiation in postnatal intestinal crypts. Acts as a regulator of bone formation and remodeling. Involved in kidney development; required for maintaining the ureteric bud in an undifferentiated state. Involved in the development of the anterior segment of the eye. Required during erythropoiesis. Also acts as a negative regulator of innate immunity by inhibiting TLR2/TLR4 associated pattern-recognition and pro-inflammatory cytokine production. Plays an important role in regulating the circadian rhythms of plasma lipids, partially through regulating the rhythmic expression of MTTP. Required for proper development of GnRH neurons (gonadotropin-releasing hormone expressing neurons) that control the release of reproductive hormones from the pituitary gland. This is Leucine-rich repeat-containing G-protein coupled receptor 4 (Lgr4) from Mus musculus (Mouse).